We begin with the raw amino-acid sequence, 671 residues long: DNA ligase (671 aa).

Residues 32 to 36 (DAEYD), 81 to 82 (SL), and Glu113 each bind NAD(+). The active-site N6-AMP-lysine intermediate is Lys115. NAD(+) contacts are provided by Arg136, Glu173, Lys290, and Lys314. Residues Cys408, Cys411, Cys426, and Cys432 each contribute to the Zn(2+) site. In terms of domain architecture, BRCT spans 593 to 671 (EIDSPFAGKT…EAEMIRLLGA (79 aa)).

It belongs to the NAD-dependent DNA ligase family. LigA subfamily. It depends on Mg(2+) as a cofactor. Requires Mn(2+) as cofactor.

The catalysed reaction is NAD(+) + (deoxyribonucleotide)n-3'-hydroxyl + 5'-phospho-(deoxyribonucleotide)m = (deoxyribonucleotide)n+m + AMP + beta-nicotinamide D-nucleotide.. In terms of biological role, DNA ligase that catalyzes the formation of phosphodiester linkages between 5'-phosphoryl and 3'-hydroxyl groups in double-stranded DNA using NAD as a coenzyme and as the energy source for the reaction. It is essential for DNA replication and repair of damaged DNA. This chain is DNA ligase, found in Salmonella dublin (strain CT_02021853).